The sequence spans 182 residues: MQTEHVILLNAQGVPTGTLEKYAAHTADTRLHLAFSSWLFNAKGQLLVTRRALSKKAWPGVWTNSVCGHPQLGESNEDAVIRRCRYELGVEITPPESIYPDFRYRATDPSGIVENEVCPVFAARTTSALQINDDEVMDYQWCDLADVLHGIDATPWAFSPWMVMQATNREARKRLSAFTQLK.

Mn(2+)-binding residues include His-25 and His-32. Residue Cys-67 is part of the active site. His-69 contributes to the Mn(2+) binding site. Position 87 (Glu-87) interacts with Mg(2+). 2 residues coordinate Mn(2+): Glu-114 and Glu-116. Glu-116 is a catalytic residue.

It belongs to the IPP isomerase type 1 family. In terms of assembly, homodimer. It depends on Mg(2+) as a cofactor. Requires Mn(2+) as cofactor.

It is found in the cytoplasm. The catalysed reaction is isopentenyl diphosphate = dimethylallyl diphosphate. The protein operates within isoprenoid biosynthesis; dimethylallyl diphosphate biosynthesis; dimethylallyl diphosphate from isopentenyl diphosphate: step 1/1. In terms of biological role, catalyzes the 1,3-allylic rearrangement of the homoallylic substrate isopentenyl (IPP) to its highly electrophilic allylic isomer, dimethylallyl diphosphate (DMAPP). The protein is Isopentenyl-diphosphate Delta-isomerase of Escherichia coli (strain K12 / MC4100 / BW2952).